The chain runs to 490 residues: Serine hydroxymethyltransferase (490 aa).

(6S)-5,6,7,8-tetrahydrofolate is bound by residues leucine 179 and 183–185; that span reads GHL. The residue at position 291 (lysine 291) is an N6-(pyridoxal phosphate)lysine. Lysine 362 is covalently cross-linked (Isoglutamyl lysine isopeptide (Lys-Gln) (interchain with Q-Cter in protein Pup)).

The protein belongs to the SHMT family. As to quaternary structure, homodimer. The cofactor is pyridoxal 5'-phosphate.

The protein resides in the cytoplasm. It catalyses the reaction (6R)-5,10-methylene-5,6,7,8-tetrahydrofolate + glycine + H2O = (6S)-5,6,7,8-tetrahydrofolate + L-serine. The protein operates within one-carbon metabolism; tetrahydrofolate interconversion. Its pathway is amino-acid biosynthesis; glycine biosynthesis; glycine from L-serine: step 1/1. Catalyzes the reversible interconversion of serine and glycine with tetrahydrofolate (THF) serving as the one-carbon carrier. This reaction serves as the major source of one-carbon groups required for the biosynthesis of purines, thymidylate, methionine, and other important biomolecules. Also exhibits THF-independent aldolase activity toward beta-hydroxyamino acids, producing glycine and aldehydes, via a retro-aldol mechanism. In Mycolicibacterium smegmatis (strain ATCC 700084 / mc(2)155) (Mycobacterium smegmatis), this protein is Serine hydroxymethyltransferase.